Consider the following 264-residue polypeptide: 3-methyl-2-oxobutanoate hydroxymethyltransferase (264 aa).

The Mg(2+) site is built by Asp45 and Asp84. Residues Asp45 to Ser46, Asp84, and Lys113 contribute to the 3-methyl-2-oxobutanoate site. Glu115 is a Mg(2+) binding site. Catalysis depends on Glu182, which acts as the Proton acceptor.

It belongs to the PanB family. As to quaternary structure, homodecamer; pentamer of dimers. Mg(2+) is required as a cofactor.

The protein resides in the cytoplasm. It carries out the reaction 3-methyl-2-oxobutanoate + (6R)-5,10-methylene-5,6,7,8-tetrahydrofolate + H2O = 2-dehydropantoate + (6S)-5,6,7,8-tetrahydrofolate. The protein operates within cofactor biosynthesis; (R)-pantothenate biosynthesis; (R)-pantoate from 3-methyl-2-oxobutanoate: step 1/2. Catalyzes the reversible reaction in which hydroxymethyl group from 5,10-methylenetetrahydrofolate is transferred onto alpha-ketoisovalerate to form ketopantoate. In Caldicellulosiruptor bescii (strain ATCC BAA-1888 / DSM 6725 / KCTC 15123 / Z-1320) (Anaerocellum thermophilum), this protein is 3-methyl-2-oxobutanoate hydroxymethyltransferase.